Here is a 424-residue protein sequence, read N- to C-terminus: Histidine--tRNA ligase (424 aa).

The protein belongs to the class-II aminoacyl-tRNA synthetase family. In terms of assembly, homodimer.

Its subcellular location is the cytoplasm. The enzyme catalyses tRNA(His) + L-histidine + ATP = L-histidyl-tRNA(His) + AMP + diphosphate + H(+). The chain is Histidine--tRNA ligase from Escherichia coli O127:H6 (strain E2348/69 / EPEC).